The primary structure comprises 131 residues: Large ribosomal subunit protein bL17 (131 aa).

It belongs to the bacterial ribosomal protein bL17 family. In terms of assembly, part of the 50S ribosomal subunit. Contacts protein L32.

This is Large ribosomal subunit protein bL17 from Methylibium petroleiphilum (strain ATCC BAA-1232 / LMG 22953 / PM1).